Reading from the N-terminus, the 451-residue chain is Scaffold protein ILK (451 aa).

N-acetylmethionine is present on M1. ANK repeat units follow at residues 2-30 (DDIF…LNQG), 31-63 (DDHG…INVM), 64-96 (NRGD…INAV), 97-129 (NEHG…VSIC), and 130-174 (NKYG…GTTR). The interaction with LIMS1 stretch occupies residues 33 to 139 (HGFSPLHWAC…NKYGEMPMDK (107 aa)). Phosphothreonine is present on T173. Residues 180–212 (GTLNKHSGIDFKQLNFLAKLNENHSGELWKGRW) form a PH-like; mediates interaction with TGFB1I1 region. S186 is subject to Phosphoserine. Residues 193–445 (LNFLAKLNEN…PKFDMIVPIL (253 aa)) form the Protein kinase domain. ATP is bound by residues N200, N202, H203, and S204. S246 bears the Phosphoserine mark. ATP contacts are provided by H270, M272, and N279. A Mg(2+)-binding site is contributed by D339. K341 is a binding site for ATP. The Nuclear localization signal motif lies at 363 to 371 (KKPEDTNRR). K425 carries the N6-acetyllysine modification.

The protein belongs to the protein kinase superfamily. TKL Ser/Thr protein kinase family. In terms of assembly, component of the heterotrimeric IPP (ILK-PINCH-PARVIN) complex composed of ILK, LIMS1/PINCH and PARVA; the complex binds to F-actin via the C-terminal tail of LIMS1 and the N-terminal region of PARVA, promoting F-actin filament bundling. Formation of the IPP complex is dependent on protein kinase C and precedes integrin-mediated cell adhesion and spreading. ILK also interacts with LIMS2/PINCH2 and with PARVB and PARVG which may substitute for LIMS1 and PARVA in the IPP complex; PARVA and PARVB compete for the same binding site. Interaction with PARVG promotes the establishment of cell polarity required for leukocyte migration. Interacts with the cytoplasmic domain of integrin ITGB1 and may also interact with integrins ITGB2, ITGB3 and/or ITGB5. Interacts probably also with TGFB1I1. Interacts (via ANK repeats) with EPHA1 (via SAM domain); stimulated by EFNA1 but independent of the kinase activity of EPHA1. Interacts with FERMT2. Interacts with LIMD2; leading to activate the protein kinase activity. Interacts with PXN/PAXILLIN (via LD motif 4). Interacts with CCDC25 (via cytoplasmic region); initiating the ILK-PARVB cascade to induce cytoskeleton rearrangement and directional migration of cells. Interacts with IQGAP1; the interaction is required for localization of IQGAP1 to the cell cortex. In terms of processing, phosphorylation by PAK1 modulates ILK subcellular location by promoting its nuclear export.

It localises to the cell junction. It is found in the focal adhesion. The protein resides in the cell membrane. Its subcellular location is the cell projection. The protein localises to the lamellipodium. It localises to the cytoplasm. It is found in the myofibril. The protein resides in the sarcomere. Its subcellular location is the nucleus. The protein localises to the cytoskeleton. It localises to the microtubule organizing center. It is found in the centrosome. The protein resides in the cell cortex. Its function is as follows. Scaffold protein which mediates protein-protein interactions during a range of cellular events including focal adhesion assembly, cell adhesion and cell migration. Regulates integrin-mediated signal transduction by contributing to inside-out integrin activation. Recruits PARVA and LIMS1/PITCH to form the heterotrimeric IPP (ILK-PINCH-PARVIN) complex which binds to F-actin via the C-terminal tail of LIMS1 and the N-terminal region of PARVA, promoting F-actin filament bundling, a process required to generate force for actin cytoskeleton reorganization and subsequent dynamic cell adhesion events such as cell spreading and migration. Binding to PARVA promotes effective assembly of ILK into focal adhesions while PARVA-bound ILK can simultaneously engage integrin-beta cytoplasmic tails to mediate cell adhesion. Plays a role with PARVG in promoting the cell adhesion and spreading of leukocytes. Acts as an upstream effector of both AKT1/PKB and GSK3. Mediates trafficking of caveolae to the cell surface in an ITGB1-dependent manner by promoting the recruitment of IQGAP1 to the cell cortex which cooperates with its effector DIAPH1 to locally stabilize microtubules and allow stable insertion of caveolae into the plasma membrane. Required for the maintenance of mitotic spindle integrity by promoting phosphorylation of TACC3 by AURKA. Associates with chromatin and may act as a negative regulator of transcription when located in the nucleus. The protein is Scaffold protein ILK of Cavia porcellus (Guinea pig).